We begin with the raw amino-acid sequence, 221 residues long: Protein N-terminal glutamine amidohydrolase (221 aa).

Ser2 bears the N-acetylserine mark. Active-site residues include Cys23, His79, and Asp97.

The protein belongs to the NTAQ1 family. In terms of assembly, monomer.

The enzyme catalyses N-terminal L-glutaminyl-[protein] + H2O = N-terminal L-glutamyl-[protein] + NH4(+). In terms of biological role, mediates the side-chain deamidation of N-terminal glutamine residues to glutamate, an important step in N-end rule pathway of protein degradation. Conversion of the resulting N-terminal glutamine to glutamate renders the protein susceptible to arginylation, polyubiquitination and degradation as specified by the N-end rule. Does not act on substrates with internal or C-terminal glutamine and does not act on non-glutamine residues in any position. Involved in immune response. Controls the expression of specific defense-response genes, activates the synthesis pathway for the phytoalexin camalexin, and influences basal resistance to the hemibiotroph pathogen Pseudomonas syringae pv tomato (Pst). The polypeptide is Protein N-terminal glutamine amidohydrolase (Arabidopsis thaliana (Mouse-ear cress)).